The primary structure comprises 236 residues: Ribonuclease 3 (236 aa).

Residues 7-136 (KSYILKKFNI…FIGALYLDQG (130 aa)) enclose the RNase III domain. Glutamate 49 serves as a coordination point for Mg(2+). The active site involves aspartate 53. 2 residues coordinate Mg(2+): aspartate 122 and glutamate 125. Glutamate 125 is an active-site residue. Residues 162–232 (DFKSRLQERL…ARAALKILED (71 aa)) form the DRBM domain.

The protein belongs to the ribonuclease III family. In terms of assembly, homodimer. Requires Mg(2+) as cofactor.

It is found in the cytoplasm. It carries out the reaction Endonucleolytic cleavage to 5'-phosphomonoester.. Functionally, digests double-stranded RNA. Involved in the processing of primary rRNA transcript to yield the immediate precursors to the large and small rRNAs (23S and 16S). Processes some mRNAs, and tRNAs when they are encoded in the rRNA operon. Processes pre-crRNA and tracrRNA of type II CRISPR loci if present in the organism. The polypeptide is Ribonuclease 3 (Leuconostoc mesenteroides subsp. mesenteroides (strain ATCC 8293 / DSM 20343 / BCRC 11652 / CCM 1803 / JCM 6124 / NCDO 523 / NBRC 100496 / NCIMB 8023 / NCTC 12954 / NRRL B-1118 / 37Y)).